Consider the following 470-residue polypeptide: Neuraminidase (470 aa).

At M1–K6 the chain is on the intravirion side. A helical transmembrane segment spans residues I7 to G27. An involved in apical transport and lipid raft association region spans residues G11–W33. The Virion surface segment spans residues N28–K470. The interval H36–S90 is hypervariable stalk region. N44, N58, N63, N70, and N88 each carry an N-linked (GlcNAc...) asparagine; by host glycan. Residues L91–K470 are head of neuraminidase. Cystine bridges form between C92/C417, C124/C129, C184/C231, C233/C238, C279/C292, C281/C290, C318/C335, and C421/C447. Residue R118 coordinates substrate. Residue N146 is glycosylated (N-linked (GlcNAc...) asparagine; by host). D151 acts as the Proton donor/acceptor in catalysis. Substrate is bound at residue R152. The N-linked (GlcNAc...) asparagine; by host glycan is linked to N235. Residue E277 to E278 participates in substrate binding. Substrate is bound at residue R293. Ca(2+)-binding residues include D294, G298, and D324. R368 contacts substrate. Y402 functions as the Nucleophile in the catalytic mechanism. Residues N434 and N455 are each glycosylated (N-linked (GlcNAc...) asparagine; by host).

The protein belongs to the glycosyl hydrolase 34 family. Homotetramer. It depends on Ca(2+) as a cofactor. Post-translationally, N-glycosylated.

The protein resides in the virion membrane. It is found in the host apical cell membrane. The catalysed reaction is Hydrolysis of alpha-(2-&gt;3)-, alpha-(2-&gt;6)-, alpha-(2-&gt;8)- glycosidic linkages of terminal sialic acid residues in oligosaccharides, glycoproteins, glycolipids, colominic acid and synthetic substrates.. Inhibited by the neuraminidase inhibitors zanamivir (Relenza) and oseltamivir (Tamiflu). These drugs interfere with the release of progeny virus from infected cells and are effective against all influenza strains. Resistance to neuraminidase inhibitors is quite rare. Its function is as follows. Catalyzes the removal of terminal sialic acid residues from viral and cellular glycoconjugates. Cleaves off the terminal sialic acids on the glycosylated HA during virus budding to facilitate virus release. Additionally helps virus spread through the circulation by further removing sialic acids from the cell surface. These cleavages prevent self-aggregation and ensure the efficient spread of the progeny virus from cell to cell. Otherwise, infection would be limited to one round of replication. Described as a receptor-destroying enzyme because it cleaves a terminal sialic acid from the cellular receptors. May facilitate viral invasion of the upper airways by cleaving the sialic acid moieties on the mucin of the airway epithelial cells. Likely to plays a role in the budding process through its association with lipid rafts during intracellular transport. May additionally display a raft-association independent effect on budding. Plays a role in the determination of host range restriction on replication and virulence. Sialidase activity in late endosome/lysosome traffic seems to enhance virus replication. This Influenza A virus (strain A/Russia:St.Petersburg/8/2006 H1N1) protein is Neuraminidase.